The primary structure comprises 256 residues: Tryptophan synthase alpha chain (256 aa).

Residues Glu-48 and Asp-59 each act as proton acceptor in the active site.

The protein belongs to the TrpA family. In terms of assembly, tetramer of two alpha and two beta chains.

The catalysed reaction is (1S,2R)-1-C-(indol-3-yl)glycerol 3-phosphate + L-serine = D-glyceraldehyde 3-phosphate + L-tryptophan + H2O. Its pathway is amino-acid biosynthesis; L-tryptophan biosynthesis; L-tryptophan from chorismate: step 5/5. Functionally, the alpha subunit is responsible for the aldol cleavage of indoleglycerol phosphate to indole and glyceraldehyde 3-phosphate. The sequence is that of Tryptophan synthase alpha chain from Caldicellulosiruptor bescii (strain ATCC BAA-1888 / DSM 6725 / KCTC 15123 / Z-1320) (Anaerocellum thermophilum).